Reading from the N-terminus, the 273-residue chain is MERSVFFISDGTAITAEVVGHSVLSQFPLTTALYTLPFVESETRARAVREQINALYQQSGVRPLVFYSIVTPAVRHIIEESAGFCQDVVQALVGPLQQELGIAPDPVAHRTHGLTATNLSKYDARITAIDYTLAHDDGISLRNLDQAQIILLGVSRCGKTPTSLYLAMQYGIRAANYPFIADDMDNLSLPAALKAHQPKLFGLTIDPERLAAIRDERLSDSRYASLRQCRMEINEVESLFRNNNIRYLNSTNHSVEEIAAKIMDVLGMSRRMY.

Residue G153–T160 coordinates ADP.

This sequence belongs to the pyruvate, phosphate/water dikinase regulatory protein family. PSRP subfamily.

It catalyses the reaction [pyruvate, water dikinase] + ADP = [pyruvate, water dikinase]-phosphate + AMP + H(+). The enzyme catalyses [pyruvate, water dikinase]-phosphate + phosphate + H(+) = [pyruvate, water dikinase] + diphosphate. In terms of biological role, bifunctional serine/threonine kinase and phosphorylase involved in the regulation of the phosphoenolpyruvate synthase (PEPS) by catalyzing its phosphorylation/dephosphorylation. This Sodalis glossinidius (strain morsitans) protein is Putative phosphoenolpyruvate synthase regulatory protein.